A 124-amino-acid polypeptide reads, in one-letter code: Large ribosomal subunit protein bL12 (124 aa).

This sequence belongs to the bacterial ribosomal protein bL12 family. Homodimer. Part of the ribosomal stalk of the 50S ribosomal subunit. Forms a multimeric L10(L12)X complex, where L10 forms an elongated spine to which 2 to 4 L12 dimers bind in a sequential fashion. Binds GTP-bound translation factors.

Forms part of the ribosomal stalk which helps the ribosome interact with GTP-bound translation factors. Is thus essential for accurate translation. This is Large ribosomal subunit protein bL12 from Nitrosomonas europaea (strain ATCC 19718 / CIP 103999 / KCTC 2705 / NBRC 14298).